The primary structure comprises 435 residues: MNQIRQAPAASASNATESKQEIRNYTMNFGPQHPAAHGVLRLILEMDGETVVRADPHIGLLHRGTEKLAESKPFNQSIGYMDRLDYVSMMCNEHAYVRAIETLIGIQAPERAQYIRTMFDEITRILNHLMWLGSNALDLGAMAVMLYAFREREELMDVYEAISGARMHAAYYRPGGVYRDLPDTMPKYKQSRWHKGKALKRLNAAREGSMLDFLEHFTDTFPQRIDEYETLLTDNRIWKQRTVGVGVIEPDVAKAWGMTGVMLRGSGIAWDLRKKQPYAKYDAVDFDIPLGTCGDCYDRYLCRVAEMRESNRIIKQCVQWLKVNPGQVMVENFKVAPPKRESMKDDMEALIHHFKLFSEGYCVPAGETYSAVEAPKGEFGCYLISDGANKPFRVHLRAPGFAHLSSMDAVVRGYMLADVVAMIGTYDLVFGEVDR.

Belongs to the complex I 49 kDa subunit family. As to quaternary structure, NDH-1 is composed of 14 different subunits. Subunits NuoB, C, D, E, F, and G constitute the peripheral sector of the complex.

It is found in the cell inner membrane. The enzyme catalyses a quinone + NADH + 5 H(+)(in) = a quinol + NAD(+) + 4 H(+)(out). Its function is as follows. NDH-1 shuttles electrons from NADH, via FMN and iron-sulfur (Fe-S) centers, to quinones in the respiratory chain. The immediate electron acceptor for the enzyme in this species is believed to be ubiquinone. Couples the redox reaction to proton translocation (for every two electrons transferred, four hydrogen ions are translocated across the cytoplasmic membrane), and thus conserves the redox energy in a proton gradient. The protein is NADH-quinone oxidoreductase subunit D of Xylella fastidiosa (strain M12).